Reading from the N-terminus, the 246-residue chain is Putative protein phosphatase 2C-type (246 aa).

Residues 2–240 (KISLKTDIGQ…DNITIALVHN (239 aa)) form the PPM-type phosphatase domain. Mn(2+) is bound by residues aspartate 36, glycine 37, aspartate 192, and aspartate 231.

Mg(2+) is required as a cofactor. The cofactor is Mn(2+).

It carries out the reaction O-phospho-L-seryl-[protein] + H2O = L-seryl-[protein] + phosphate. The catalysed reaction is O-phospho-L-threonyl-[protein] + H2O = L-threonyl-[protein] + phosphate. In Streptococcus pyogenes serotype M6 (strain ATCC BAA-946 / MGAS10394), this protein is Putative protein phosphatase 2C-type.